We begin with the raw amino-acid sequence, 131 residues long: Nuclear envelope phosphatase-regulatory subunit 1 homolog (131 aa).

Transmembrane regions (helical) follow at residues 33-53 and 68-88; these read LLAV…WYWL and WIHP…ILGI.

It belongs to the CNEP1R1 family.

It is found in the nucleus membrane. Its subcellular location is the cytoplasm. Functionally, may form with the serine/threonine protein phosphatase l(1)G0269 an active complex dephosphorylating and activating lipin-like phosphatases. Lipins are phosphatidate phosphatases that catalyze the conversion of phosphatidic acid to diacylglycerol and control the metabolism of fatty acids at different levels. The polypeptide is Nuclear envelope phosphatase-regulatory subunit 1 homolog (Drosophila melanogaster (Fruit fly)).